A 599-amino-acid polypeptide reads, in one-letter code: PR domain zinc finger protein 5 (599 aa).

One can recognise an SET domain in the interval 8–124 (DRFALKSSRV…TDTELLIGYL (117 aa)). 12 consecutive C2H2-type zinc fingers follow at residues 167–190 (FACPQCESSFPSEEVLTEHLQSLH), 199–221 (FKCENCGKKFPVRQALQRHFEQH), 231–256 (FVCKADSCGKRLKSKDALRRHQENVH), 264–286 (LICSVCNRKCTSVSSLQEHRKIH), 289–311 (FDCQECMKKFISANQLKRHMITH), 317–339 (YNCEICNKSFKRLDQVGAHKVIH), 345–367 (YQCKLCGKGFAHRNVYKNHKKTH), 373–395 (FQCDACKALFRTPFSLQRHLLIH), 401–424 (FKCHHCDATFKRKDTLNVHVQVVH), 430–452 (YRCELCNKAFVTPSVLRSHKKTH), 458–480 (KVCPYCGQKFASSGTLRVHIRSH), and 486–508 (YQCPYCEKGFSKNDGLKMHIRTH). The C2H2-type 13; degenerate zinc finger occupies 514–536 (YQCSECSKAFSQKRGLDEHKRTH). 2 C2H2-type zinc fingers span residues 542–564 (FQCDVCDLAFSLKKMLIRHKMTH) and 571–594 (AECHFCHKKFTRNDYLKVHMDNIH).

The protein belongs to the class V-like SAM-binding methyltransferase superfamily. Interacts with EHMT2/G9A, GFI1 and HDAC1.

Its subcellular location is the nucleus. In terms of biological role, sequence-specific DNA-binding transcription factor. Represses transcription at least in part by recruitment of the histone methyltransferase EHMT2/G9A and histone deacetylases such as HDAC1. Regulates hematopoiesis-associated protein-coding and microRNA (miRNA) genes. May regulate the expression of proteins involved in extracellular matrix development and maintenance, connective tissue components and molecules regulating cell migration and adhesion. May cause G2/M arrest and apoptosis in cancer cells. This is PR domain zinc finger protein 5 (Prdm5) from Mus musculus (Mouse).